We begin with the raw amino-acid sequence, 546 residues long: Adenine DNA glycosylase (546 aa).

Residues 19 to 51 (RAAVGSGHRKQAASQEGRQKHAKNNSQAKPSAC) are disordered. The Proton donor/acceptor role is filled by E131. [4Fe-4S] cluster is bound by residues C287, C294, C297, and C303. Residues 364–495 (PREESSATCV…AMKKVFRVYQ (132 aa)) form the Nudix hydrolase domain. A Nudix box motif is present at residues 404-426 (VTWEPSEQLQRKALLQELQRWAG).

The protein belongs to the Nth/MutY family. [4Fe-4S] cluster is required as a cofactor.

It is found in the nucleus. Its subcellular location is the mitochondrion. It carries out the reaction Hydrolyzes free adenine bases from 7,8-dihydro-8-oxoguanine:adenine mismatched double-stranded DNA, leaving an apurinic site.. Functionally, involved in oxidative DNA damage repair. Initiates repair of A*oxoG to C*G by removing the inappropriately paired adenine base from the DNA backbone. Possesses both adenine and 2-OH-A DNA glycosylase activities. In Homo sapiens (Human), this protein is Adenine DNA glycosylase (MUTYH).